The following is a 254-amino-acid chain: MTLAKRIIPCLDVTAGRVVKGVNFLELRDAGDPIEIARRYDEQGADEITFLDITATSDGRDLILDIIEAVASQVFIPLTVGGGVRAVDDVRRLLNAGADKVGINSSAISNPQLVFDASQKYGSQCIVVAIDAKKASDGRWEVFTHGGRKATGLDAVEWAKKMQNLGAGEILLTSMDRDGTKIGFDLDLTRSVSDAISIPVIASGGVGGLQDLADGVKVGRADAVLAASIFHYGQHTVQEAKRFMADQGIPMRLV.

Residues Asp-12 and Asp-131 contribute to the active site.

The protein belongs to the HisA/HisF family. As to quaternary structure, heterodimer of HisH and HisF.

The protein resides in the cytoplasm. The enzyme catalyses 5-[(5-phospho-1-deoxy-D-ribulos-1-ylimino)methylamino]-1-(5-phospho-beta-D-ribosyl)imidazole-4-carboxamide + L-glutamine = D-erythro-1-(imidazol-4-yl)glycerol 3-phosphate + 5-amino-1-(5-phospho-beta-D-ribosyl)imidazole-4-carboxamide + L-glutamate + H(+). It functions in the pathway amino-acid biosynthesis; L-histidine biosynthesis; L-histidine from 5-phospho-alpha-D-ribose 1-diphosphate: step 5/9. Functionally, IGPS catalyzes the conversion of PRFAR and glutamine to IGP, AICAR and glutamate. The HisF subunit catalyzes the cyclization activity that produces IGP and AICAR from PRFAR using the ammonia provided by the HisH subunit. The polypeptide is Imidazole glycerol phosphate synthase subunit HisF (Janthinobacterium sp. (strain Marseille) (Minibacterium massiliensis)).